A 692-amino-acid chain; its full sequence is Elongation factor G (692 aa).

The tr-type G domain maps to 8–282 (EKTRNIGIMA…AVVEYMPAPT (275 aa)). Residues 17 to 24 (AHIDAGKT), 81 to 85 (DTPGH), and 135 to 138 (NKMD) contribute to the GTP site. The disordered stretch occupies residues 285–304 (PNIKGVHPETGEADERHSSD). Basic and acidic residues predominate over residues 290–304 (VHPETGEADERHSSD).

Belongs to the TRAFAC class translation factor GTPase superfamily. Classic translation factor GTPase family. EF-G/EF-2 subfamily.

The protein localises to the cytoplasm. Functionally, catalyzes the GTP-dependent ribosomal translocation step during translation elongation. During this step, the ribosome changes from the pre-translocational (PRE) to the post-translocational (POST) state as the newly formed A-site-bound peptidyl-tRNA and P-site-bound deacylated tRNA move to the P and E sites, respectively. Catalyzes the coordinated movement of the two tRNA molecules, the mRNA and conformational changes in the ribosome. This is Elongation factor G from Desulfitobacterium hafniense (strain Y51).